Here is a 486-residue protein sequence, read N- to C-terminus: Hexosaminidase D (486 aa).

The active-site Proton donor is glutamate 149.

This sequence belongs to the glycosyl hydrolase 20 family. Homodimer; disulfide-linked. In terms of tissue distribution, expressed in synovial fibroblasts and synovial membranes.

Its subcellular location is the cytoplasm. It is found in the nucleus. It localises to the extracellular vesicle. The catalysed reaction is Hydrolysis of terminal non-reducing N-acetyl-D-hexosamine residues in N-acetyl-beta-D-hexosaminides.. With respect to regulation, inhibited by O-(2-acetamido-2-deoxy-D-glucopyranosylidene)amino N-phenylcarbamate (PUGNAc). Inhibited by galacto-NAG-thiazoline. Its function is as follows. Has hexosaminidase activity. Responsible for the cleavage of the monosaccharides N-acetylglucosamine (GlcNAc) and N-acetylgalactosamine (GalNAc) from cellular substrates. Has a preference for galactosaminide over glucosaminide substrates. The chain is Hexosaminidase D from Homo sapiens (Human).